Consider the following 297-residue polypeptide: Glycosylphosphatidylinositol anchor biosynthesis protein 11 (297 aa).

Residues 1 to 18 (MTSASPSPLRAANAASSA) are compositionally biased toward low complexity. A disordered region spans residues 1 to 26 (MTSASPSPLRAANAASSAPVPPPAMK). Helical transmembrane passes span 44–64 (SFVH…ALVA) and 76–96 (FLAL…GSVL). A disordered region spans residues 97–140 (PSPPASPVSDGDEKEKEKEKEKEKEKEKRKLPLRAGKLPRKKNQ). The span at 107-126 (GDEKEKEKEKEKEKEKEKRK) shows a compositional bias: basic and acidic residues. Basic residues predominate over residues 127 to 140 (LPLRAGKLPRKKNQ). N139 carries an N-linked (GlcNAc...) asparagine glycan. 4 helical membrane-spanning segments follow: residues 157–177 (LILT…LFGA), 187–207 (VLCA…VHGV), 225–245 (VWGG…PIPL), and 253–273 (AFPI…SVVC).

The protein belongs to the PIGF family.

It is found in the endoplasmic reticulum membrane. It participates in glycolipid biosynthesis; glycosylphosphatidylinositol-anchor biosynthesis. Its function is as follows. Acts in the GPI biosynthetic pathway between GlcNAc-PI synthesis and GPI transfer to protein. This is Glycosylphosphatidylinositol anchor biosynthesis protein 11 (gpi11) from Aspergillus fumigatus (strain ATCC MYA-4609 / CBS 101355 / FGSC A1100 / Af293) (Neosartorya fumigata).